The following is a 149-amino-acid chain: Transcriptional repressor NrdR (149 aa).

Residues 3–34 (CPFCFAVDTKVIDSRLVGEGSSVRRRRQCLVC) fold into a zinc finger. In terms of domain architecture, ATP-cone spans 49 to 139 (PRVVKSNDVR…VYRSFEDIKE (91 aa)).

It belongs to the NrdR family. Zn(2+) is required as a cofactor.

In terms of biological role, negatively regulates transcription of bacterial ribonucleotide reductase nrd genes and operons by binding to NrdR-boxes. The protein is Transcriptional repressor NrdR of Shigella flexneri.